The primary structure comprises 473 residues: Dol-P-Glc:Glc(2)Man(9)GlcNAc(2)-PP-Dol alpha-1,2-glucosyltransferase (473 aa).

At 1–6 (MAQLEG) the chain is on the cytoplasmic side. A helical membrane pass occupies residues 7 to 27 (YYFSAALSCTFLVSCLLFSAF). At 28-64 (SRALREPYMDEIFHLPQAQRYCEGHFSLSQWDPMITT) the chain is on the extracellular side. Residues 65–85 (LPGLYLVSIGVIKPAIWIFGW) form a helical membrane-spanning segment. The Cytoplasmic portion of the chain corresponds to 86 to 97 (SEHVVCSIGMLR). Residues 98–118 (FVNLLFSVGNFYLLYLLFCKV) form a helical membrane-spanning segment. Residues 119–130 (QPRNKAASSIQR) lie on the Extracellular side of the membrane. Transmembrane regions (helical) follow at residues 131-151 (VLST…FLYY) and 152-172 (TEAG…YGNH). Over 173-175 (KTS) the chain is Extracellular. The helical transmembrane segment at 176-196 (AFLGFCGFMFRQTNIIWAVFC) threads the bilayer. Residues 197 to 249 (AGNVIAQKLTEAWKTELQKKEDRLPPIKGPFAEFRKILQFLLAYSMSFKNLSM) lie on the Cytoplasmic side of the membrane. The helical transmembrane segment at 250–270 (LLLLTWPYILLGFLFCAFVVV) threads the bilayer. Residues 271–283 (NGGIVIGDRSSHE) lie on the Extracellular side of the membrane. The chain crosses the membrane as a helical span at residues 284-304 (ACLHFPQLFYFFSFTLFFSFP). The Cytoplasmic segment spans residues 305–323 (HLLSPSKIKTFLSLVWKRR). Residues 324–344 (ILFFVVTLVSVFLVWKFTYAH) traverse the membrane as a helical segment. The Extracellular portion of the chain corresponds to 345–367 (KYLLADNRHYTFYVWKRVFQRYE). A helical transmembrane segment spans residues 368–388 (TVKYLLVPAYIFAGWSIADSL). Over 389-392 (KSKS) the chain is Cytoplasmic. The helical transmembrane segment at 393-413 (IFWNLMFFICLFTVIVPQKLL) threads the bilayer. The Extracellular segment spans residues 414–436 (EFRYFILPYVIYRLNIPLPPTSR). Residues 437 to 457 (LICELSCYAVVNFITFFIFLN) form a helical membrane-spanning segment. The Cytoplasmic portion of the chain corresponds to 458–473 (KTFQWPNSQDIQRFMW).

The protein belongs to the ALG10 glucosyltransferase family.

Its subcellular location is the endoplasmic reticulum membrane. The enzyme catalyses an alpha-D-Glc-(1-&gt;3)-alpha-D-Glc-(1-&gt;3)-alpha-D-Man-(1-&gt;2)-alpha-D-Man-(1-&gt;2)-alpha-D-Man-(1-&gt;3)-[alpha-D-Man-(1-&gt;2)-alpha-D-Man-(1-&gt;3)-[alpha-D-Man-(1-&gt;2)-alpha-D-Man-(1-&gt;6)]-alpha-D-Man-(1-&gt;6)]-beta-D-Man-(1-&gt;4)-beta-D-GlcNAc-(1-&gt;4)-alpha-D-GlcNAc-diphospho-di-trans,poly-cis-dolichol + a di-trans,poly-cis-dolichyl beta-D-glucosyl phosphate = a alpha-D-Glc-(1-&gt;2)-alpha-D-Glc-(1-&gt;3)-alpha-D-Glc-(1-&gt;3)-alpha-D-Man-(1-&gt;2)-alpha-D-Man-(1-&gt;2)-alpha-D-Man-(1-&gt;3)-[alpha-D-Man-(1-&gt;2)-alpha-D-Man-(1-&gt;3)-[alpha-D-Man-(1-&gt;2)-alpha-D-Man-(1-&gt;6)]-alpha-D-Man-(1-&gt;6)]-beta-D-Man-(1-&gt;4)-beta-D-GlcNAc-(1-&gt;4)-alpha-D-GlcNAc-diphospho-di-trans,poly-cis-dolichol + a di-trans,poly-cis-dolichyl phosphate + H(+). Its pathway is protein modification; protein glycosylation. Its function is as follows. Dol-P-Glc:Glc(2)Man(9)GlcNAc(2)-PP-Dol alpha-1,2-glucosyltransferase that operates in the biosynthetic pathway of dolichol-linked oligosaccharides, the glycan precursors employed in protein asparagine (N)-glycosylation. The assembly of dolichol-linked oligosaccharides begins on the cytosolic side of the endoplasmic reticulum membrane and finishes in its lumen. The sequential addition of sugars to dolichol pyrophosphate produces dolichol-linked oligosaccharides containing fourteen sugars, including two GlcNAcs, nine mannoses and three glucoses. Once assembled, the oligosaccharide is transferred from the lipid to nascent proteins by oligosaccharyltransferases. In the lumen of the endoplasmic reticulum, adds the third and last glucose residue from dolichyl phosphate glucose (Dol-P-Glc) onto the lipid-linked oligosaccharide intermediate Glc(2)Man(9)GlcNAc(2)-PP-Dol to produce Glc(3)Man(9)GlcNAc(2)-PP-Dol. The protein is Dol-P-Glc:Glc(2)Man(9)GlcNAc(2)-PP-Dol alpha-1,2-glucosyltransferase of Homo sapiens (Human).